The primary structure comprises 100 residues: U-myrmeciitoxin(01)-Mg7b (100 aa).

Positions 1-17 are cleaved as a signal peptide; the sequence is MKLSCLSLALAIILVLA. A propeptide spanning residues 18 to 50 is cleaved from the precursor; it reads IVYSPHMEVKALADAEPDAIGFADAFGEADAEP. O-linked (GalNAc...) serine glycosylation occurs at S85. Residues T94 and T95 are each glycosylated (O-linked (GalNAc...) threonine).

The protein belongs to the formicidae venom precursor-01 superfamily. Glycosylation is critical to maintaining the aqueous solubility of this protein, but does not directly contribute to its activity. Expressed by the venom gland.

Its subcellular location is the secreted. The protein resides in the target cell membrane. Its function is as follows. Neurotoxin that triggers pain behavior and inflammation in mammals, and is paralytic and lethal to insects. Causes a time-dependent increase in cell leak current. May act by targeting membranes. The sequence is that of U-myrmeciitoxin(01)-Mg7b from Myrmecia gulosa (Red bulldog ant).